The primary structure comprises 322 residues: tRNA U34 carboxymethyltransferase (322 aa).

Residues Lys-92, Trp-106, Lys-111, Gly-131, 153–155 (DPS), 181–182 (VE), Met-196, Tyr-200, and Arg-315 contribute to the carboxy-S-adenosyl-L-methionine site.

The protein belongs to the class I-like SAM-binding methyltransferase superfamily. CmoB family. As to quaternary structure, homotetramer.

It catalyses the reaction carboxy-S-adenosyl-L-methionine + 5-hydroxyuridine(34) in tRNA = 5-carboxymethoxyuridine(34) in tRNA + S-adenosyl-L-homocysteine + H(+). In terms of biological role, catalyzes carboxymethyl transfer from carboxy-S-adenosyl-L-methionine (Cx-SAM) to 5-hydroxyuridine (ho5U) to form 5-carboxymethoxyuridine (cmo5U) at position 34 in tRNAs. This is tRNA U34 carboxymethyltransferase from Pseudoalteromonas translucida (strain TAC 125).